Reading from the N-terminus, the 471-residue chain is 3-isopropylmalate dehydratase large subunit (471 aa).

Residues Cys351, Cys414, and Cys417 each contribute to the [4Fe-4S] cluster site.

This sequence belongs to the aconitase/IPM isomerase family. LeuC type 1 subfamily. As to quaternary structure, heterodimer of LeuC and LeuD. The cofactor is [4Fe-4S] cluster.

The enzyme catalyses (2R,3S)-3-isopropylmalate = (2S)-2-isopropylmalate. The protein operates within amino-acid biosynthesis; L-leucine biosynthesis; L-leucine from 3-methyl-2-oxobutanoate: step 2/4. Functionally, catalyzes the isomerization between 2-isopropylmalate and 3-isopropylmalate, via the formation of 2-isopropylmaleate. This Colwellia psychrerythraea (strain 34H / ATCC BAA-681) (Vibrio psychroerythus) protein is 3-isopropylmalate dehydratase large subunit.